A 920-amino-acid polypeptide reads, in one-letter code: B3 domain-containing protein REM17 (920 aa).

3 consecutive DNA-binding regions (TF-B3) follow at residues 12–105 (NPHF…LGPS), 153–250 (RFVA…CRAK), and 267–361 (CFEG…LCPT). 3 disordered regions span residues 405–438 (DDDQ…SSFV), 540–562 (LACS…KNTS), and 585–614 (DDDQ…SSDH). The segment covering 423 to 432 (NPREKVESSS) has biased composition (basic and acidic residues). The TF-B3 4 DNA-binding region spans 436-531 (SFVGSVNPSS…NKPVLSLCPT (96 aa)). 2 DNA-binding regions (TF-B3) span residues 616 to 714 (SFVA…SLSE) and 727 to 823 (YFVG…LCPA). Over residues 842–852 (NSLSSNPSSGD) the composition is skewed to low complexity. The segment at 842–870 (NSLSSNPSSGDDSSRSEESEEENMEDKNI) is disordered.

The protein localises to the nucleus. This is B3 domain-containing protein REM17 (REM17) from Arabidopsis thaliana (Mouse-ear cress).